The primary structure comprises 229 residues: Sugar fermentation stimulation protein homolog (229 aa).

This sequence belongs to the SfsA family.

This Clostridium novyi (strain NT) protein is Sugar fermentation stimulation protein homolog.